Consider the following 637-residue polypeptide: DNA gyrase subunit B (637 aa).

One can recognise a Toprim domain in the interval 422-536 (CEVYIVEGDS…AGYVYLAMPP (115 aa)). Mg(2+)-binding residues include glutamate 428, aspartate 501, and aspartate 503.

Belongs to the type II topoisomerase GyrB family. As to quaternary structure, heterotetramer, composed of two GyrA and two GyrB chains. In the heterotetramer, GyrA contains the active site tyrosine that forms a transient covalent intermediate with DNA, while GyrB binds cofactors and catalyzes ATP hydrolysis. Mg(2+) serves as cofactor. Mn(2+) is required as a cofactor. It depends on Ca(2+) as a cofactor.

It is found in the cytoplasm. The catalysed reaction is ATP-dependent breakage, passage and rejoining of double-stranded DNA.. A type II topoisomerase that negatively supercoils closed circular double-stranded (ds) DNA in an ATP-dependent manner to modulate DNA topology and maintain chromosomes in an underwound state. Negative supercoiling favors strand separation, and DNA replication, transcription, recombination and repair, all of which involve strand separation. Also able to catalyze the interconversion of other topological isomers of dsDNA rings, including catenanes and knotted rings. Type II topoisomerases break and join 2 DNA strands simultaneously in an ATP-dependent manner. This is DNA gyrase subunit B from Treponema pallidum (strain Nichols).